The primary structure comprises 616 residues: Methionine--tRNA ligase, chloroplastic/mitochondrial (616 aa).

A 'HIGH' region motif is present at residues 78–88 (YYVNAPPHMGS). The short motif at 366-370 (KMGKS) is the 'KMSKS' region element. An ATP-binding site is contributed by lysine 369. Over residues 582–593 (LNPEKEEDEKKP) the composition is skewed to basic and acidic residues. The disordered stretch occupies residues 582-602 (LNPEKEEDEKKPKVGKKTGKA).

It belongs to the class-I aminoacyl-tRNA synthetase family.

The protein localises to the plastid. It is found in the chloroplast. The protein resides in the mitochondrion. The enzyme catalyses tRNA(Met) + L-methionine + ATP = L-methionyl-tRNA(Met) + AMP + diphosphate. The polypeptide is Methionine--tRNA ligase, chloroplastic/mitochondrial (Arabidopsis thaliana (Mouse-ear cress)).